Reading from the N-terminus, the 284-residue chain is 2-dehydro-3-deoxyphosphooctonate aldolase (284 aa).

Belongs to the KdsA family.

The protein localises to the cytoplasm. The catalysed reaction is D-arabinose 5-phosphate + phosphoenolpyruvate + H2O = 3-deoxy-alpha-D-manno-2-octulosonate-8-phosphate + phosphate. It participates in carbohydrate biosynthesis; 3-deoxy-D-manno-octulosonate biosynthesis; 3-deoxy-D-manno-octulosonate from D-ribulose 5-phosphate: step 2/3. Its pathway is bacterial outer membrane biogenesis; lipopolysaccharide biosynthesis. The protein is 2-dehydro-3-deoxyphosphooctonate aldolase of Aliivibrio fischeri (strain ATCC 700601 / ES114) (Vibrio fischeri).